Reading from the N-terminus, the 760-residue chain is Formate acetyltransferase 1 (760 aa).

The 623-residue stretch at 3-625 (ELNEKLATAW…KTGNTPDGRR (623 aa)) folds into the PFL domain. Lys63 is modified (N6-acetyllysine; alternate). N6-succinyllysine; alternate is present on Lys63. Lys107 bears the N6-succinyllysine mark. Position 117 is an N6-acetyllysine; alternate (Lys117). Lys117 carries the post-translational modification N6-succinyllysine; alternate. At Lys124 the chain carries N6-succinyllysine. Residue Lys195 is modified to N6-acetyllysine; alternate. Position 195 is an N6-succinyllysine; alternate (Lys195). Residue Cys419 is the S-acetylcysteine intermediate of the active site. The active-site Cysteine radical intermediate is the Cys420. Lys454 carries the N6-acetyllysine; alternate modification. Lys454 carries the N6-succinyllysine; alternate modification. Lys467 carries the post-translational modification N6-succinyllysine. Lys541 and Lys591 each carry N6-acetyllysine. Residues 632–760 (PGANPMHGRD…VITRTFTQSM (129 aa)) enclose the Glycine radical domain. Lys654 carries the N6-succinyllysine modification. Gly735 bears the Glycine radical mark.

The protein belongs to the glycyl radical enzyme (GRE) family. PFL subfamily. As to quaternary structure, homodimer. Interacts specifically with FocA.

The protein localises to the cytoplasm. It carries out the reaction formate + acetyl-CoA = pyruvate + CoA. It functions in the pathway fermentation; pyruvate fermentation; formate from pyruvate: step 1/1. Catalyzes the conversion of pyruvate to formate and acetyl-CoA. In addition, may be involved in the control of the activity of the formate channel FocA, via direct interaction with FocA. The chain is Formate acetyltransferase 1 (pflB) from Escherichia coli (strain K12).